Consider the following 426-residue polypeptide: Probable imidazolonepropionase (426 aa).

The 4-imidazolone-5-propanoate site is built by Y159 and H192. Y159 serves as a coordination point for N-formimidoyl-L-glutamate. H260 contributes to the Fe(3+) binding site. H260 contributes to the Zn(2+) binding site. E263 provides a ligand contact to 4-imidazolone-5-propanoate. Residue D334 participates in Fe(3+) binding. D334 is a Zn(2+) binding site. N336 serves as a coordination point for N-formimidoyl-L-glutamate.

The protein belongs to the metallo-dependent hydrolases superfamily. HutI family. Zn(2+) serves as cofactor. The cofactor is Fe(3+).

It catalyses the reaction 4-imidazolone-5-propanoate + H2O = N-formimidoyl-L-glutamate. Its pathway is amino-acid degradation; L-histidine degradation into L-glutamate; N-formimidoyl-L-glutamate from L-histidine: step 3/3. The chain is Probable imidazolonepropionase (AMDHD1) from Homo sapiens (Human).